A 326-amino-acid chain; its full sequence is Transposase for insertion sequence element IS4351 (326 aa).

An Integrase catalytic domain is found at 156–317; that stretch reads IDERPEIVEL…TPNEKFKQII (162 aa).

Belongs to the transposase IS30 family.

In terms of biological role, required for the transposition of the insertion element. The sequence is that of Transposase for insertion sequence element IS4351 from Bacteroides fragilis.